We begin with the raw amino-acid sequence, 507 residues long: Phosphoprotein (507 aa).

The tract at residues 1-48 (MAEEQARHVKNGLECIRALKAEPIGSLAIEEAMAAWSEISDNPGQERA) is interaction with N0. Disordered regions lie at residues 41–99 (DNPG…PPRN), 134–163 (GLDGDSTLSGGDNESENSDVDIGEPDTEGY), 201–231 (NNFPKLGKTLNVPPPPDPGRASTSGTPIKKG), and 250–273 (GATQCARKSPSEPSGPGAPAGNVP). S86 carries the post-translational modification Phosphoserine. The span at 134-145 (GLDGDSTLSGGD) shows a compositional bias: low complexity. Positions 146–160 (NESENSDVDIGEPDT) are enriched in acidic residues. S151 carries the phosphoserine modification. Low complexity predominate over residues 260-270 (SEPSGPGAPAG). Residues 304–376 (GDYYDDELFS…LSSIMIAIPG (73 aa)) form a multimerization region. 2 interaction with the L polymerase regions span residues 361–377 (STLEGHLSSIMIAIPGL) and 396–410 (PIIGRDSGRALAEVL). Positions 457–507 (GPASRSVIRSIIKSSRLEEDRKRYLMTLLDDIKGANDLAKFHQMLMKIIMK) are x domain (XD). The interaction with the nucleocapsid (N-RNA) stretch occupies residues 459–507 (ASRSVIRSIIKSSRLEEDRKRYLMTLLDDIKGANDLAKFHQMLMKIIMK).

Belongs to the morbillivirus P protein family. Homotetramer. Interacts (via multimerization domain and XD domain) with polymerase L; this interaction forms the polymerase L-P complex. Interacts (via N-terminus) with N0 (via Ncore); this interaction allows P to chaperon N0 to avoid N polymerization and non-specific RNA binding before encapsidation. Interacts (via C-terminus) with N-RNA template (via Ntail); this interaction maintains the P/L complex anchored to the nucleocapsid template during the sequential transcription. Interacts (via C-terminus) with protein C this interaction allows C to associate with the ribonucleocapsid. In terms of processing, phosphorylation on serines by host CK2 is necessary for the formation of viral factories.

In terms of biological role, essential cofactor of the RNA polymerase L that plays a central role in the transcription and replication by forming the polymerase complex with RNA polymerase L and recruiting L to the genomic N-RNA template for RNA synthesis. Also plays a central role in the encapsidation of nascent RNA chains by forming the encapsidation complex with the nucleocapsid protein N (N-P complex). Acts as a chaperone for newly synthesized free N protein, so-called N0, allowing encapsidation of nascent RNA chains during replication. The nucleoprotein protein N prevents excessive phosphorylation of P, which leads to down-regulation of viral transcription/ replication. Participates, together with N, in the formation of viral factories (viroplasms), which are large inclusions in the host cytoplasm where replication takes place. The chain is Phosphoprotein (P/V) from Measles virus (strain Edmonston-AIK-C vaccine) (MeV).